A 179-amino-acid chain; its full sequence is Protein GrpE (179 aa).

Residues 1–14 show a composition bias toward basic and acidic residues; the sequence is MSKKDKKEEIKEEV. The tract at residues 1–40 is disordered; the sequence is MSKKDKKEEIKEEVEATEPTTEESVEEVAEETSENKELQE. A compositionally biased stretch (acidic residues) spans 15–32; the sequence is EATEPTTEESVEEVAEET.

It belongs to the GrpE family. In terms of assembly, homodimer.

The protein localises to the cytoplasm. Participates actively in the response to hyperosmotic and heat shock by preventing the aggregation of stress-denatured proteins, in association with DnaK and GrpE. It is the nucleotide exchange factor for DnaK and may function as a thermosensor. Unfolded proteins bind initially to DnaJ; upon interaction with the DnaJ-bound protein, DnaK hydrolyzes its bound ATP, resulting in the formation of a stable complex. GrpE releases ADP from DnaK; ATP binding to DnaK triggers the release of the substrate protein, thus completing the reaction cycle. Several rounds of ATP-dependent interactions between DnaJ, DnaK and GrpE are required for fully efficient folding. This Streptococcus mutans serotype c (strain ATCC 700610 / UA159) protein is Protein GrpE.